The sequence spans 195 residues: 3-isopropylmalate dehydratase small subunit (195 aa).

It belongs to the LeuD family. LeuD type 1 subfamily. As to quaternary structure, heterodimer of LeuC and LeuD.

It carries out the reaction (2R,3S)-3-isopropylmalate = (2S)-2-isopropylmalate. It participates in amino-acid biosynthesis; L-leucine biosynthesis; L-leucine from 3-methyl-2-oxobutanoate: step 2/4. In terms of biological role, catalyzes the isomerization between 2-isopropylmalate and 3-isopropylmalate, via the formation of 2-isopropylmaleate. The sequence is that of 3-isopropylmalate dehydratase small subunit from Parafrankia sp. (strain EAN1pec).